Here is a 1371-residue protein sequence, read N- to C-terminus: MSAPDEGRRDPPKPKGKTLGSFFGSLPGFSSARNLVANAHSSARARPAADPTGAPAAEAAQPQAQVAAHPEQTAPWTEKELQPSEKMVSGAKDLVCSKMSRAKDAVSSGVASVVDVAKGVVQGGLDTTRSALTGTKEVVSSGVTGAMDMAKGAVQGGLDTSKAVLTGTKDTVSTGLTGAVNVAKGTVQAGVDTTKTVLTGTKDTVTTGVMGAVNLAKGTVQTGVETSKAVLTGTKDAVSTGLTGAVNVARGSIQTGVDTSKTVLTGTKDTVCSGVTGAMNVAKGTIQTGVDTSKTVLTGTKDTVCSGVTGAMNVAKGTIQTGVDTSKTVLTGTKDTVCSGVTGAMNVAKGTIQTGVDTTKTVLTGTKNTVCSGVTGAVNLAKEAIQGGLDTTKSMVMGTKDTMSTGLTGAANVAKGAMQTGLNTTQNIATGTKDTVCSGVTGAMNLARGTIQTGVDTTKIVLTGTKDTVCSGVTGAANVAKGAVQGGLDTTKSVLTGTKDAVSTGLTGAVNVAKGTVQTGVDTTKTVLTGTKDTVCSGVTSAVNVAKGAVQGGLDTTKSVVIGTKDTMSTGLTGAANVAKGAVQTGVDTAKTVLTGTKDTVTTGLVGAVNVAKGTVQTGMDTTKTVLTGTKDTIYSGVTSAVNVAKGAVQTGLKTTQNIATGTKNTFGSGVTSAVNVAKGAAQTGVDTAKTVLTGTKDTVTTGLMGAVNVAKGTVQTSVDTTKTVLTGTKDTVCSGVTGAANVAKGAIQGGLDTTKSVLTGTKDAVSTGLTGAVKLAKGTVQTGMDTTKTVLTGTKDAVCSGVTGAANVAKGAVQMGVDTAKTVLTGTKDTVCSGVTGAANVAKGAVQTGLKTTQNIATGTKNTLGSGVTGAAKVAKGAVQGGLDTTKSVLTGTKDAVSTGLTGAVNLAKGTVQTGVDTSKTVLTGTKDTVCSGVTGAVNVAKGTVQTGVDTAKTVLSGAKDAVTTGVTGAVNVAKGTVQTGVDASKAVLMGTKDTVFSGVTGAMSMAKGAVQGGLDTTKTVLTGTKDAVSAGLMGSGNVATGATHTGLSTFQNWLPSTPATSWGGLTSSRTTDNGGEQTALSPQEAPFSGISTPPDVLSVGPEPAWEAAATTKGLATDVATFTQGAAPGREDTGLLATTHGPEEAPRLAMLQNELEGLGDIFHPMNAEEQAQLAASQPGPKVLSAEQGSYFVRLGDLGPSFRQRAFEHAVSHLQHGQFQARDTLAQLQDCFRLIEKAQQAPEGQPRLDQGSGASAEDAAVQEERDAGVLSRVCGLLRQLHTAYSGLVSSLQGLPAELQQPVGRARHSLCELYGIVASAGSVEELPAERLVQSREGVHQAWQGLEQLLEGLQHNPPLSWLVGPFALPAGGQ.

Positions 1 to 13 (MSAPDEGRRDPPK) are enriched in basic and acidic residues. Residues 1–22 (MSAPDEGRRDPPKPKGKTLGSF) are disordered. Phosphoserine occurs at positions 25 and 31. The segment at 37-86 (ANAHSSARARPAADPTGAPAAEAAQPQAQVAAHPEQTAPWTEKELQPSEK) is disordered. A compositionally biased stretch (low complexity) spans 44-72 (RARPAADPTGAPAAEAAQPQAQVAAHPEQ). Repeat copies occupy residues 109–141 (GVAS…VVSS), 142–174 (GVTG…TVST), 175–207 (GLTG…TVTT), 208–240 (GVMG…AVST), 241–273 (GLTG…TVCS), 274–306 (GVTG…TVCS), 307–339 (GVTG…TVCS), 340–372 (GVTG…TVCS), 373–405 (GVTG…TMST), 406–438 (GLTG…TVCS), 439–471 (GVTG…TVCS), 472–504 (GVTG…AVST), 505–537 (GLTG…TVCS), 538–570 (GVTS…TMST), 571–603 (GLTG…TVTT), 604–636 (GLVG…TIYS), 637–669 (GVTS…TFGS), 670–702 (GVTS…TVTT), 703–735 (GLMG…TVCS), 736–768 (GVTG…AVST), 769–801 (GLTG…AVCS), 802–834 (GVTG…TVCS), 835–867 (GVTG…TLGS), 868–900 (GVTG…AVST), 901–933 (GLTG…TVCS), 934–966 (GVTG…AVTT), and 967–999 (GVTG…TVFS). The segment at 109–999 (GVASVVDVAK…LMGTKDTVFS (891 aa)) is 27 X 33 AA approximate tandem repeat. A compositionally biased stretch (polar residues) spans 1060-1083 (PATSWGGLTSSRTTDNGGEQTALS). 2 disordered regions span residues 1060–1093 (PATS…SGIS) and 1240–1260 (QAPE…EDAA).

This sequence belongs to the perilipin family.

It localises to the cell membrane. The protein resides in the cytoplasm. Its subcellular location is the lipid droplet. May play a role in triacylglycerol packaging into adipocytes. May function as a coat protein involved in the biogenesis of lipid droplets. In Homo sapiens (Human), this protein is Perilipin-4.